The following is a 503-amino-acid chain: Ribonuclease Y (503 aa).

The chain crosses the membrane as a helical span at residues 2–22; that stretch reads GIIIGLIIVSVALIISLCSLL. In terms of domain architecture, KH spans 193–253; the sequence is TTNLVKLPND…IRREIATKTL (61 aa). In terms of domain architecture, HD spans 319 to 412; that stretch reads VLLHSVEVAK…VAIADAISAS (94 aa).

The protein belongs to the RNase Y family.

The protein resides in the cell membrane. Functionally, endoribonuclease that initiates mRNA decay. This Mesoplasma florum (strain ATCC 33453 / NBRC 100688 / NCTC 11704 / L1) (Acholeplasma florum) protein is Ribonuclease Y.